We begin with the raw amino-acid sequence, 333 residues long: Large ribosomal subunit protein mL39 (333 aa).

Positions 56–122 (DKIEVRYLGL…QESCTLQLLN (67 aa)) constitute a TGS domain. The segment at 311–333 (SKKPSPARLPNEPFEEQQQLQLS) is disordered.

It belongs to the mitochondrion-specific ribosomal protein mL39 family. In terms of assembly, component of the mitochondrial ribosome large subunit (39S) which comprises a 16S rRNA and about 50 distinct proteins.

Its subcellular location is the mitochondrion. This Drosophila melanogaster (Fruit fly) protein is Large ribosomal subunit protein mL39 (mRpL39).